A 192-amino-acid polypeptide reads, in one-letter code: UPF0301 protein Bcep18194_A3962 (192 aa).

It belongs to the UPF0301 (AlgH) family.

The chain is UPF0301 protein Bcep18194_A3962 from Burkholderia lata (strain ATCC 17760 / DSM 23089 / LMG 22485 / NCIMB 9086 / R18194 / 383).